The sequence spans 88 residues: Small ribosomal subunit protein uS17 (88 aa).

It belongs to the universal ribosomal protein uS17 family. In terms of assembly, part of the 30S ribosomal subunit.

One of the primary rRNA binding proteins, it binds specifically to the 5'-end of 16S ribosomal RNA. The polypeptide is Small ribosomal subunit protein uS17 (Lactobacillus acidophilus (strain ATCC 700396 / NCK56 / N2 / NCFM)).